Consider the following 141-residue polypeptide: Putative pre-16S rRNA nuclease (141 aa).

It belongs to the YqgF nuclease family.

The protein resides in the cytoplasm. Functionally, could be a nuclease involved in processing of the 5'-end of pre-16S rRNA. The chain is Putative pre-16S rRNA nuclease from Histophilus somni (strain 129Pt) (Haemophilus somnus).